The primary structure comprises 327 residues: tRNA N6-adenosine threonylcarbamoyltransferase (327 aa).

The Fe cation site is built by H109 and H113. Substrate is bound by residues 132 to 136 (MVSGG), D165, G178, D182, and N268. D296 is a binding site for Fe cation.

The protein belongs to the KAE1 / TsaD family. Fe(2+) serves as cofactor.

The protein localises to the cytoplasm. The enzyme catalyses L-threonylcarbamoyladenylate + adenosine(37) in tRNA = N(6)-L-threonylcarbamoyladenosine(37) in tRNA + AMP + H(+). Required for the formation of a threonylcarbamoyl group on adenosine at position 37 (t(6)A37) in tRNAs that read codons beginning with adenine. Is involved in the transfer of the threonylcarbamoyl moiety of threonylcarbamoyl-AMP (TC-AMP) to the N6 group of A37, together with TsaE and TsaB. TsaD likely plays a direct catalytic role in this reaction. The polypeptide is tRNA N6-adenosine threonylcarbamoyltransferase (Thermotoga petrophila (strain ATCC BAA-488 / DSM 13995 / JCM 10881 / RKU-1)).